A 477-amino-acid chain; its full sequence is Cobyric acid synthase (477 aa).

Positions G248–F432 constitute a GATase cobBQ-type domain. C330 functions as the Nucleophile in the catalytic mechanism. H424 is an active-site residue.

Belongs to the CobB/CobQ family. CobQ subfamily.

It participates in cofactor biosynthesis; adenosylcobalamin biosynthesis. Catalyzes amidations at positions B, D, E, and G on adenosylcobyrinic A,C-diamide. NH(2) groups are provided by glutamine, and one molecule of ATP is hydrogenolyzed for each amidation. The protein is Cobyric acid synthase of Paracoccus denitrificans (strain Pd 1222).